The chain runs to 1007 residues: MAATEPPSLREQPEMDDADNSEKSVNEENGEVSEDQSQNKHSRHKKKKHKHRSKHKKHKHSSEEDRDKKHKHKHKHKKHKRKEVLDASDKEGLSPAKRTKLDDLALLEDLEKQRALIKAELDNELMEGKVQSGMGLILQGYESGSEEEGEIHEKARNGNRSSTRSSSTRGKLEITDNKNSAKKRSKSRSKERTRHRSDKRKSKGAVEMMREKANRSKSKERRKSKSPSKRSKSQDQARKSKSPTLRRRSQEKVGKARSPADEKIKSEEKGKIKDRKKSPIVNERSRDRSKKSKSPVDLRDKSKDRRSRSKERKSKRSEIDKEKKPIKSPSKDASSGKENRSPSRRPGRSPKRRSLSPKQRDKSRRSRSPLLNDRRSKQSKSPSRTLSPGRRAKSRSLERKRREPERRRLSSPRTRPRDDILGRCERSKDASPINRWSPSRRRSRSPIRRRSRSPLRRSRSPRRRSRSPRRRDRSRRSRSRLRRRSRSRGGHRRRSRSKVKEDKFKGSLSEGMKVEQESSSDDNLEDFDVEEEDEEAVIEQRRIQRQAIVQKYKYLAEDSNISVPSEPSSPQSSTRSRSPSPDDILERVAADVKEYERENVDTFEASVKAKHNLMTVEQNNGSSQKKLLAPDMFTESDDMFAAYFDSARLRAAGIGKDFKENPNLRDNWTDAEGYYRVNIGEVLDKRYNVYGYTGQGVFSNVVRARDNARANQEVAVKIIRNNELMQKTGLKELEFLKKLNDADPDDKFHCLRLFRHFYHKQHLCLVFEPLSMNLREVLKKYGKDVGLHIKAVRSYSQQLFLALKLLKRCNILHADIKPDNILVNESKTILKLCDFGSASHVADNDITPYLVSRFYRAPEIIIGKSYDYGIDMWSVGCTLYELYTGKILFPGKTNNHMLKLAMDLKGKMPNKMIRKGVFKDQHFDQNLNFMYIEVDKVTEREKVTVMSTINPTKDLLADLIGCQRLPEDQRKKVHQLKDLLDQILMLDPAKRISINQALQHAFIQEKI.

The segment at 1–104 (MAATEPPSLR…PAKRTKLDDL (104 aa)) is disordered. Ala2 is modified (N-acetylalanine). Residues Ser8, Ser21, Ser24, and Ser33 each carry the phosphoserine modification. Basic residues-rich tracts occupy residues 40–60 (KHSR…KHKH) and 68–82 (KKHK…HKRK). A compositionally biased stretch (basic and acidic residues) spans 83–92 (EVLDASDKEG). A phosphoserine mark is found at Ser88 and Ser94. Lys100 carries the N6-acetyllysine; alternate modification. Lys100 participates in a covalent cross-link: Glycyl lysine isopeptide (Lys-Gly) (interchain with G-Cter in SUMO2); alternate. Lys112 is covalently cross-linked (Glycyl lysine isopeptide (Lys-Gly) (interchain with G-Cter in SUMO2)). Lys118 is covalently cross-linked (Glycyl lysine isopeptide (Lys-Gly) (interchain with G-Cter in SUMO2); alternate). Residue Lys118 forms a Glycyl lysine isopeptide (Lys-Gly) (interchain with G-Cter in SUMO1); alternate linkage. Ser132 is modified (phosphoserine). Tyr141 bears the Phosphotyrosine mark. Disordered regions lie at residues 141 to 535 (YESG…EDEE) and 560 to 583 (NISV…SPDD). Phosphoserine occurs at positions 143, 145, and 167. Residues 158–169 (GNRSSTRSSSTR) show a composition bias toward low complexity. Glycyl lysine isopeptide (Lys-Gly) (interchain with G-Cter in SUMO2) cross-links involve residues Lys171 and Lys178. Basic residues-rich tracts occupy residues 180–203 (SAKK…RKSK) and 215–231 (RSKS…SKRS). A phosphoserine mark is found at Ser240, Ser242, Ser258, Ser278, Ser292, and Ser294. Positions 248-271 (RSQEKVGKARSPADEKIKSEEKGK) are enriched in basic and acidic residues. A compositionally biased stretch (basic and acidic residues) spans 294–303 (SPVDLRDKSK). A compositionally biased stretch (basic residues) spans 304 to 315 (DRRSRSKERKSK). Residues 316–325 (RSEIDKEKKP) are compositionally biased toward basic and acidic residues. Phosphoserine occurs at positions 328, 354, 356, 366, and 368. Over residues 342–367 (PSRRPGRSPKRRSLSPKQRDKSRRSR) the composition is skewed to basic residues. Thr385 is modified (phosphothreonine). Ser387 carries the phosphoserine modification. Composition is skewed to basic and acidic residues over residues 395-408 (RSLE…ERRR) and 415-429 (RPRD…RSKD). Ser427, Ser431, and Ser437 each carry phosphoserine. The span at 438-497 (PSRRRSRSPIRRRSRSPLRRSRSPRRRSRSPRRRDRSRRSRSRLRRRSRSRGGHRRRSRS) shows a compositional bias: basic residues. Phosphoserine is present on residues Ser518, Ser519, Ser520, Ser565, Ser569, Ser576, Ser578, and Ser580. A compositionally biased stretch (acidic residues) spans 518–535 (SSSDDNLEDFDVEEEDEE). Positions 562–581 (SVPSEPSSPQSSTRSRSPSP) are enriched in low complexity. Residues Lys593 and Lys659 each participate in a glycyl lysine isopeptide (Lys-Gly) (interchain with G-Cter in SUMO2) cross-link. Residues 687-1003 (YNVYGYTGQG…INQALQHAFI (317 aa)) form the Protein kinase domain. Residues 693–701 (TGQGVFSNV) and Lys717 contribute to the ATP site. Lys717 bears the N6-acetyllysine mark. Asp815 (proton acceptor) is an active-site residue. The residue at position 849 (Tyr849) is a Phosphotyrosine. The residue at position 852 (Ser852) is a Phosphoserine.

This sequence belongs to the protein kinase superfamily. CMGC Ser/Thr protein kinase family. Interacts with CLK1 C-terminus. Associates with the U5 snRNP and NCOR1 deacetylase complexes. Identified in the spliceosome C complex. Phosphorylated by CLK1. Autophosphorylated; phosphorylation inhibits interaction with its targets, such as PRPF6 or SMARCA4.

It is found in the nucleus. Its subcellular location is the chromosome. The protein resides in the centromere. The protein localises to the kinetochore. It catalyses the reaction L-seryl-[protein] + ATP = O-phospho-L-seryl-[protein] + ADP + H(+). The catalysed reaction is L-threonyl-[protein] + ATP = O-phospho-L-threonyl-[protein] + ADP + H(+). Functionally, serine/threonine kinase involved in spliceosomal assembly as well as mitosis and signaling regulation. Connects chromatin mediated regulation of transcription and pre-mRNA splicing. During spliceosomal assembly, interacts with and phosphorylates PRPF6 and PRPF31, components of the U4/U6-U5 tri-small nuclear ribonucleoprotein (snRNP), to facilitate the formation of the spliceosome B complex. Plays a role in regulating transcription and the spindle assembly checkpoint (SAC). Associates with U5 snRNP and NCOR1 deacetylase complexes which may allow a coordination of pre-mRNA splicing with chromatin remodeling events involved in transcriptional regulation. Associates and probably phosphorylates SMARCA4 and NCOR1. Phosphorylates SRSF1. Associates with kinetochores during mitosis and is necessary for recruitment and maintenance of the checkpoint proteins such as MAD1L1 and MAD12L1 at the kinetochores. Phosphorylates and regulates the activity of the transcription factors such as ELK1 and KLF13. Phosphorylates nuclear YAP1 and WWTR1/TAZ which induces nuclear exclusion and regulates Hippo signaling pathway, involved in tissue growth control. The protein is Serine/threonine-protein kinase PRP4 homolog (Prp4k) of Rattus norvegicus (Rat).